Reading from the N-terminus, the 289-residue chain is Protoheme IX farnesyltransferase (289 aa).

9 helical membrane passes run 9-29 (VALM…PVMM), 35-55 (MPSL…AGSA), 89-109 (LTFG…LVNW), 110-130 (PSAL…TLGL), 138-158 (IVIG…AVTG), 164-184 (AVLL…ALAM), 188-208 (DDYA…EVVT), 228-248 (VAHT…WFLA), and 269-289 (FHMS…TAVV).

The protein belongs to the UbiA prenyltransferase family. Protoheme IX farnesyltransferase subfamily.

It localises to the cell membrane. The enzyme catalyses heme b + (2E,6E)-farnesyl diphosphate + H2O = Fe(II)-heme o + diphosphate. It functions in the pathway porphyrin-containing compound metabolism; heme O biosynthesis; heme O from protoheme: step 1/1. Its function is as follows. Converts heme B (protoheme IX) to heme O by substitution of the vinyl group on carbon 2 of heme B porphyrin ring with a hydroxyethyl farnesyl side group. This Frankia alni (strain DSM 45986 / CECT 9034 / ACN14a) protein is Protoheme IX farnesyltransferase.